We begin with the raw amino-acid sequence, 516 residues long: Apolipoprotein N-acyltransferase (516 aa).

Helical transmembrane passes span 23–43 (ILIL…AFAP), 68–88 (AFWL…RWIY), 94–114 (VAGL…AYLA), 135–155 (WLLA…WVMT), and 178–198 (LGGI…LAML). Residues 241–481 (AQGNIAQELK…VLTGFAQSRQ (241 aa)) enclose the CN hydrolase domain. Glu279 serves as the catalytic Proton acceptor. Lys339 is an active-site residue. Catalysis depends on Cys391, which acts as the Nucleophile. A helical transmembrane segment spans residues 489–509 (FGNLPVVLGCGALLLLALLLG).

It belongs to the CN hydrolase family. Apolipoprotein N-acyltransferase subfamily.

The protein localises to the cell inner membrane. The enzyme catalyses N-terminal S-1,2-diacyl-sn-glyceryl-L-cysteinyl-[lipoprotein] + a glycerophospholipid = N-acyl-S-1,2-diacyl-sn-glyceryl-L-cysteinyl-[lipoprotein] + a 2-acyl-sn-glycero-3-phospholipid + H(+). It functions in the pathway protein modification; lipoprotein biosynthesis (N-acyl transfer). Functionally, catalyzes the phospholipid dependent N-acylation of the N-terminal cysteine of apolipoprotein, the last step in lipoprotein maturation. The sequence is that of Apolipoprotein N-acyltransferase from Chromobacterium violaceum (strain ATCC 12472 / DSM 30191 / JCM 1249 / CCUG 213 / NBRC 12614 / NCIMB 9131 / NCTC 9757 / MK).